Consider the following 85-residue polypeptide: UPF0335 protein BH15140 (85 aa).

Belongs to the UPF0335 family.

In Bartonella henselae (strain ATCC 49882 / DSM 28221 / CCUG 30454 / Houston 1) (Rochalimaea henselae), this protein is UPF0335 protein BH15140.